We begin with the raw amino-acid sequence, 396 residues long: Tryptophan synthase beta chain (396 aa).

Residue Lys88 is modified to N6-(pyridoxal phosphate)lysine.

It belongs to the TrpB family. In terms of assembly, tetramer of two alpha and two beta chains. Pyridoxal 5'-phosphate is required as a cofactor.

It catalyses the reaction (1S,2R)-1-C-(indol-3-yl)glycerol 3-phosphate + L-serine = D-glyceraldehyde 3-phosphate + L-tryptophan + H2O. Its pathway is amino-acid biosynthesis; L-tryptophan biosynthesis; L-tryptophan from chorismate: step 5/5. Its function is as follows. The beta subunit is responsible for the synthesis of L-tryptophan from indole and L-serine. This is Tryptophan synthase beta chain from Shewanella baltica (strain OS195).